We begin with the raw amino-acid sequence, 469 residues long: Swarming motility regulation sensor protein RssA (469 aa).

A run of 2 helical transmembrane segments spans residues 12-32 (IIFQ…WVKY) and 167-187 (VPLL…AYFS). A Histidine kinase domain is found at 245 to 459 (DAAHELRTPI…GFIIDLPESY (215 aa)). His-248 carries the phosphohistidine; by autocatalysis modification.

Its subcellular location is the cell inner membrane. The catalysed reaction is ATP + protein L-histidine = ADP + protein N-phospho-L-histidine.. Its function is as follows. Member of the two-component regulatory system RssA/RssB involved in regulation of swarming motility which has been shown to be inhibited by saturated fatty acids. RssA/RssB regulates cellular fatty acid composition, hemolysin production and cell surface topography. RssA/RssB negatively regulates the activity of SlhBA. It can also act as a negative regulator for the control of the swarming initiation. The protein is Swarming motility regulation sensor protein RssA (rssA) of Serratia marcescens.